The following is a 316-amino-acid chain: Acetyl-coenzyme A carboxylase carboxyl transferase subunit alpha (316 aa).

One can recognise a CoA carboxyltransferase C-terminal domain in the interval 35–292 (EIEILSQKLE…KTYVLQELKD (258 aa)).

This sequence belongs to the AccA family. As to quaternary structure, acetyl-CoA carboxylase is a heterohexamer composed of biotin carboxyl carrier protein (AccB), biotin carboxylase (AccC) and two subunits each of ACCase subunit alpha (AccA) and ACCase subunit beta (AccD).

The protein localises to the cytoplasm. The enzyme catalyses N(6)-carboxybiotinyl-L-lysyl-[protein] + acetyl-CoA = N(6)-biotinyl-L-lysyl-[protein] + malonyl-CoA. It functions in the pathway lipid metabolism; malonyl-CoA biosynthesis; malonyl-CoA from acetyl-CoA: step 1/1. Its function is as follows. Component of the acetyl coenzyme A carboxylase (ACC) complex. First, biotin carboxylase catalyzes the carboxylation of biotin on its carrier protein (BCCP) and then the CO(2) group is transferred by the carboxyltransferase to acetyl-CoA to form malonyl-CoA. This is Acetyl-coenzyme A carboxylase carboxyl transferase subunit alpha from Alkaliphilus oremlandii (strain OhILAs) (Clostridium oremlandii (strain OhILAs)).